The chain runs to 344 residues: Serpentine receptor class alpha-27 (344 aa).

7 helical membrane-spanning segments follow: residues 28–48 (SIWMKINFVFVFILIFLTFYL), 67–87 (QILLMITLLNANLNQLIFLEI), 128–148 (GLLSALTFDRFFALYASTVYV), 157–177 (MLITVSIIVTVIVHIRTYGGV), 203–223 (AIFWIIMANCVLTIAVLLLNI), 252–272 (ICSVTSTQFVFLSFSTAALAI), and 287–307 (INIQYINGGVYGNLSIPVLIY).

Belongs to the nematode receptor-like protein sra family.

It is found in the membrane. This Caenorhabditis elegans protein is Serpentine receptor class alpha-27 (sra-27).